Here is a 183-residue protein sequence, read N- to C-terminus: Protein GrpE (183 aa).

The span at Met1–Lys14 shows a compositional bias: basic and acidic residues. The tract at residues Met1–Glu20 is disordered.

The protein belongs to the GrpE family. Homodimer.

Its subcellular location is the cytoplasm. Participates actively in the response to hyperosmotic and heat shock by preventing the aggregation of stress-denatured proteins, in association with DnaK and GrpE. It is the nucleotide exchange factor for DnaK and may function as a thermosensor. Unfolded proteins bind initially to DnaJ; upon interaction with the DnaJ-bound protein, DnaK hydrolyzes its bound ATP, resulting in the formation of a stable complex. GrpE releases ADP from DnaK; ATP binding to DnaK triggers the release of the substrate protein, thus completing the reaction cycle. Several rounds of ATP-dependent interactions between DnaJ, DnaK and GrpE are required for fully efficient folding. This Vibrio vulnificus (strain CMCP6) protein is Protein GrpE.